A 281-amino-acid polypeptide reads, in one-letter code: Aspartate/glutamate leucyltransferase (281 aa).

Belongs to the R-transferase family. Bpt subfamily.

The protein resides in the cytoplasm. The enzyme catalyses N-terminal L-glutamyl-[protein] + L-leucyl-tRNA(Leu) = N-terminal L-leucyl-L-glutamyl-[protein] + tRNA(Leu) + H(+). It catalyses the reaction N-terminal L-aspartyl-[protein] + L-leucyl-tRNA(Leu) = N-terminal L-leucyl-L-aspartyl-[protein] + tRNA(Leu) + H(+). Its function is as follows. Functions in the N-end rule pathway of protein degradation where it conjugates Leu from its aminoacyl-tRNA to the N-termini of proteins containing an N-terminal aspartate or glutamate. In Paracoccus denitrificans (strain Pd 1222), this protein is Aspartate/glutamate leucyltransferase.